A 291-amino-acid polypeptide reads, in one-letter code: 11-beta-hydroxysteroid dehydrogenase 1 (291 aa).

Over 1–7 the chain is Cytoplasmic; it reads MAFMKTH. The chain crosses the membrane as a helical; Signal-anchor for type II membrane protein span at residues 8-24; sequence LLPILGLFMAYYYYSAY. The Lumenal portion of the chain corresponds to 25-291; sequence EEFRPEMLQG…TSYSTDGLIN (267 aa). NADP(+) is bound by residues 41–67, 92–93, and 119–121; these read GASK…TARS, TM, and NHI. 2 N-linked (GlcNAc...) asparagine glycosylation sites follow: asparagine 123 and asparagine 162. Substrate is bound at residue serine 170. The Proton acceptor role is filled by tyrosine 183. An NADP(+)-binding site is contributed by 183–187; the sequence is YSASK. A glycan (N-linked (GlcNAc...) asparagine) is linked at asparagine 207. 218–222 provides a ligand contact to NADP(+); that stretch reads IDTDT.

The protein belongs to the short-chain dehydrogenases/reductases (SDR) family. As to quaternary structure, homodimer. As to expression, abundantly expressed in the liver, followed by fibroblasts, also detected in the brain, lung, heart, and ovary, and in smaller amounts in kidney, skin, and spleen.

It is found in the endoplasmic reticulum membrane. The enzyme catalyses an 11beta-hydroxysteroid + NADP(+) = an 11-oxosteroid + NADPH + H(+). It carries out the reaction cortisone + NADPH + H(+) = cortisol + NADP(+). It catalyses the reaction corticosterone + NADP(+) = 11-dehydrocorticosterone + NADPH + H(+). The catalysed reaction is a 7beta-hydroxysteroid + NADP(+) = a 7-oxosteroid + NADPH + H(+). The enzyme catalyses 7-oxocholesterol + NADPH + H(+) = 7beta-hydroxycholesterol + NADP(+). It carries out the reaction chenodeoxycholate + NADP(+) = 7-oxolithocholate + NADPH + H(+). It catalyses the reaction 7-oxolithocholate + NADPH + H(+) = ursodeoxycholate + NADP(+). The catalysed reaction is glycochenodeoxycholate + NADP(+) = 7-oxoglycolithocholate + NADPH + H(+). The enzyme catalyses taurochenodeoxycholate + NADP(+) = 7-oxotaurolithocholate + NADPH + H(+). It carries out the reaction tauroursodeoxycholate + NADP(+) = 7-oxotaurolithocholate + NADPH + H(+). It catalyses the reaction glycoursodeoxycholate + NADP(+) = 7-oxoglycolithocholate + NADPH + H(+). The catalysed reaction is 7-oxopregnenolone + NADPH + H(+) = 7beta-hydroxypregnenolone + NADP(+). The enzyme catalyses 3beta,7alpha-dihydroxyandrost-5-en-17-one + NADP(+) = 3beta-hydroxy-5-androstene-7,17-dione + NADPH + H(+). It carries out the reaction 3beta-hydroxy-5-androstene-7,17-dione + NADPH + H(+) = 3beta,7beta-dihydroxyandrost-5-en-17-one + NADP(+). It catalyses the reaction 3beta-hydroxy-5alpha-androstane-7,17-dione + NADPH + H(+) = 3beta,7beta-dihydroxy-5alpha-androstan-17-one + NADP(+). It functions in the pathway steroid metabolism. In terms of biological role, controls the reversible conversion of biologically active glucocorticoids such as cortisone to cortisol, and 11-dehydrocorticosterone to corticosterone in the presence of NADP(H). Participates in the corticosteroid receptor-mediated anti-inflammatory response, as well as metabolic and homeostatic processes. Bidirectional in vitro, predominantly functions as a reductase in vivo, thereby increasing the concentration of active glucocorticoids. It has broad substrate specificity, besides glucocorticoids, it accepts other steroid and sterol substrates. Interconverts 7-oxo- and 7-hydroxy-neurosteroids such as 7-oxopregnenolone and 7beta-hydroxypregnenolone, 7-oxodehydroepiandrosterone (3beta-hydroxy-5-androstene-7,17-dione) and 7beta-hydroxydehydroepiandrosterone (3beta,7beta-dihydroxyandrost-5-en-17-one), among others. Catalyzes the stereo-specific conversion of the major dietary oxysterol, 7-ketocholesterol (7-oxocholesterol), into the more polar 7-beta-hydroxycholesterol metabolite. 7-oxocholesterol is one of the most important oxysterols, it participates in several events such as induction of apoptosis, accumulation in atherosclerotic lesions, lipid peroxidation, and induction of foam cell formation. Mediates the 7-oxo reduction of 7-oxolithocholate mainly to chenodeoxycholate, and to a lesser extent to ursodeoxycholate, both in its free form and when conjugated to glycine or taurine, providing a link between glucocorticoid activation and bile acid metabolism. Catalyzes the synthesis of 7-beta-25-dihydroxycholesterol from 7-oxo-25-hydroxycholesterol in vitro, which acts as a ligand for the G-protein-coupled receptor (GPCR) Epstein-Barr virus-induced gene 2 (EBI2) and may thereby regulate immune cell migration. The polypeptide is 11-beta-hydroxysteroid dehydrogenase 1 (HSD11B1) (Saimiri sciureus (Common squirrel monkey)).